A 649-amino-acid polypeptide reads, in one-letter code: Protein phosphatase Slingshot homolog 3 (649 aa).

The segment covering 1–20 (MALVTVSRSPPASGHSTPVG) has biased composition (polar residues). Positions 1 to 32 (MALVTVSRSPPASGHSTPVGPTQDRVVRRRGR) are disordered. Ala-2 is modified (N-acetylalanine). Ser-9 and Ser-38 each carry phosphoserine. The disordered stretch occupies residues 49–90 (LQDGGDSNVASEADSEPMEEPSGEEQPTEDQTDKGQGLQSPW). Over residues 61–78 (ADSEPMEEPSGEEQPTED) the composition is skewed to acidic residues. Ser-88 is modified (phosphoserine). The 56-residue stretch at 266-321 (EKMEQAILAELWQVLDTSDLDSVTSKEIRQALELRLGCPLQQYRDFIDNQMLLLMA) folds into the DEK-C domain. In terms of domain architecture, Tyrosine-protein phosphatase spans 325–466 (RASRIFPHLY…LRTYQGILTA (142 aa)). Residue Cys-410 is the Phosphocysteine intermediate of the active site. Low complexity-rich tracts occupy residues 541-551 (LEPSESESTPE) and 608-627 (TRAF…GMSS). Disordered stretches follow at residues 541-586 (LEPS…KGPW) and 608-649 (TRAF…EDKA). Basic and acidic residues predominate over residues 639–649 (SVDDSREEDKA).

This sequence belongs to the protein-tyrosine phosphatase family. In terms of assembly, does not bind to, or colocalize with, filamentous actin. In terms of tissue distribution, expressed in brain, small intestine and testis. Also expressed at lower levels in heart, kidney, liver, spleen and thymus.

Its subcellular location is the cytoplasm. It is found in the cytoskeleton. The protein resides in the nucleus. It catalyses the reaction O-phospho-L-tyrosyl-[protein] + H2O = L-tyrosyl-[protein] + phosphate. The enzyme catalyses O-phospho-L-seryl-[protein] + H2O = L-seryl-[protein] + phosphate. It carries out the reaction O-phospho-L-threonyl-[protein] + H2O = L-threonyl-[protein] + phosphate. In terms of biological role, protein phosphatase which may play a role in the regulation of actin filament dynamics. Can dephosphorylate and activate the actin binding/depolymerizing factor cofilin, which subsequently binds to actin filaments and stimulates their disassembly. The sequence is that of Protein phosphatase Slingshot homolog 3 (Ssh3) from Mus musculus (Mouse).